Reading from the N-terminus, the 387-residue chain is 3-ketoacyl-CoA thiolase (387 aa).

Cys-91 functions as the Acyl-thioester intermediate in the catalytic mechanism. Active-site proton acceptor residues include His-343 and Cys-373.

Belongs to the thiolase-like superfamily. Thiolase family. In terms of assembly, heterotetramer of two alpha chains (FadB) and two beta chains (FadA).

The protein resides in the cytoplasm. It carries out the reaction an acyl-CoA + acetyl-CoA = a 3-oxoacyl-CoA + CoA. Its pathway is lipid metabolism; fatty acid beta-oxidation. Functionally, catalyzes the final step of fatty acid oxidation in which acetyl-CoA is released and the CoA ester of a fatty acid two carbons shorter is formed. This Vibrio vulnificus (strain CMCP6) protein is 3-ketoacyl-CoA thiolase.